We begin with the raw amino-acid sequence, 91 residues long: PGSPQKRAASPRKSPRKGSPKKSPMIRAAITAMRERKGSSVAKIKSYIAANYRVNMTNLQPHIRRALRSGVASGALKQVTGTGATGRFRVG.

The segment at 1 to 25 (PGSPQKRAASPRKSPRKGSPKKSPM) is disordered. Over residues 9–20 (ASPRKSPRKGSP) the composition is skewed to basic residues. An H15 domain is found at 18-91 (GSPKKSPMIR…TGATGRFRVG (74 aa)).

This sequence belongs to the histone H1/H5 family.

Its subcellular location is the nucleus. It localises to the chromosome. In terms of biological role, histones H1 are necessary for the condensation of nucleosome chains into higher-order structures. This is Histone H1, sperm from Sphaerechinus granularis (Purple sea urchin).